The following is a 173-amino-acid chain: MKTKEVVDELTVKRAITRITYEIIERNKDLNKIVLAGIKTRGVFIAHRIQERLKQLENLSVPVVELDTKPFRDDVKSGEDTSLVSVDVTDREVILVDDVLYTGRTIRAAIDNIVGHGRPARVSLAVLVDRGHRELPIRPDYVGKNIPTSRSEEIIVEMTELDDQDRVLITEEA.

Residues V93–T105 carry the PRPP-binding motif.

This sequence belongs to the purine/pyrimidine phosphoribosyltransferase family. PyrR subfamily. In terms of assembly, homodimer and homohexamer; in equilibrium.

It carries out the reaction UMP + diphosphate = 5-phospho-alpha-D-ribose 1-diphosphate + uracil. Its function is as follows. Regulates transcriptional attenuation of the pyrimidine nucleotide (pyr) operon by binding in a uridine-dependent manner to specific sites on pyr mRNA. This disrupts an antiterminator hairpin in the RNA and favors formation of a downstream transcription terminator, leading to a reduced expression of downstream genes. In terms of biological role, also displays a weak uracil phosphoribosyltransferase activity which is not physiologically significant. In Streptococcus pneumoniae (strain 70585), this protein is Bifunctional protein PyrR.